The primary structure comprises 199 residues: Calcium-binding protein CAST (199 aa).

A compositionally biased stretch (basic and acidic residues) spans 1 to 13 (MGSVQDENKDEFK). Residues 1-31 (MGSVQDENKDEFKQSLTRGKLKPSSSSSFRL) are disordered. 4 EF-hand domains span residues 36–71 (LNSI…LGLD), 75–110 (SEIE…VFFG), 125–160 (QDES…LGLP), and 163–198 (SEID…VIVP). Asp-49, Asn-51, Asp-53, and Glu-60 together coordinate Ca(2+). Ca(2+) contacts are provided by Asp-138, Asn-140, Asp-142, Glu-149, Asp-178, Asp-180, Arg-182, and Glu-187.

Not known. Probably binds 3 calcium ions. This Solanum tuberosum (Potato) protein is Calcium-binding protein CAST.